A 315-amino-acid polypeptide reads, in one-letter code: Ribosomal RNA small subunit methyltransferase H (315 aa).

S-adenosyl-L-methionine contacts are provided by residues 37–39, Asp-57, Phe-83, Asp-105, and Gln-112; that span reads GGH.

This sequence belongs to the methyltransferase superfamily. RsmH family.

It is found in the cytoplasm. It catalyses the reaction cytidine(1402) in 16S rRNA + S-adenosyl-L-methionine = N(4)-methylcytidine(1402) in 16S rRNA + S-adenosyl-L-homocysteine + H(+). Functionally, specifically methylates the N4 position of cytidine in position 1402 (C1402) of 16S rRNA. This chain is Ribosomal RNA small subunit methyltransferase H, found in Pseudomonas putida (strain ATCC 700007 / DSM 6899 / JCM 31910 / BCRC 17059 / LMG 24140 / F1).